The sequence spans 910 residues: Aconitate hydratase A (910 aa).

[4Fe-4S] cluster is bound by residues C454, C520, and C523.

The protein belongs to the aconitase/IPM isomerase family. Monomer. [4Fe-4S] cluster serves as cofactor.

It catalyses the reaction citrate = D-threo-isocitrate. The catalysed reaction is (2S,3R)-3-hydroxybutane-1,2,3-tricarboxylate = 2-methyl-cis-aconitate + H2O. It participates in carbohydrate metabolism; tricarboxylic acid cycle; isocitrate from oxaloacetate: step 2/2. Its pathway is organic acid metabolism; propanoate degradation. Functionally, involved in the catabolism of short chain fatty acids (SCFA) via the tricarboxylic acid (TCA)(acetyl degradation route) and probably the 2-methylcitrate cycle I (propionate degradation route). Catalyzes the reversible isomerization of citrate to isocitrate via cis-aconitate. Could catalyze the hydration of 2-methyl-cis-aconitate to yield (2R,3S)-2-methylisocitrate. The apo form of AcnA functions as a RNA-binding regulatory protein. The chain is Aconitate hydratase A (acnA) from Pseudomonas aeruginosa (strain ATCC 15692 / DSM 22644 / CIP 104116 / JCM 14847 / LMG 12228 / 1C / PRS 101 / PAO1).